A 334-amino-acid chain; its full sequence is GTP 3',8-cyclase (334 aa).

Positions 13-239 constitute a Radical SAM core domain; it reads RFHRKFYYLR…KVKAVNDGPA (227 aa). GTP is bound at residue R22. Residues C29 and C33 each contribute to the [4Fe-4S] cluster site. S-adenosyl-L-methionine is bound at residue Y35. Residue C36 participates in [4Fe-4S] cluster binding. R73 contributes to the GTP binding site. G77 provides a ligand contact to S-adenosyl-L-methionine. T104 is a binding site for GTP. Residue S128 participates in S-adenosyl-L-methionine binding. K165 is a GTP binding site. An S-adenosyl-L-methionine-binding site is contributed by M199. [4Fe-4S] cluster contacts are provided by C262 and C265. Residue 267–269 coordinates GTP; that stretch reads RLR. C279 contributes to the [4Fe-4S] cluster binding site.

Belongs to the radical SAM superfamily. MoaA family. In terms of assembly, monomer and homodimer. The cofactor is [4Fe-4S] cluster.

The catalysed reaction is GTP + AH2 + S-adenosyl-L-methionine = (8S)-3',8-cyclo-7,8-dihydroguanosine 5'-triphosphate + 5'-deoxyadenosine + L-methionine + A + H(+). It participates in cofactor biosynthesis; molybdopterin biosynthesis. Its function is as follows. Catalyzes the cyclization of GTP to (8S)-3',8-cyclo-7,8-dihydroguanosine 5'-triphosphate. This is GTP 3',8-cyclase from Vibrio atlanticus (strain LGP32) (Vibrio splendidus (strain Mel32)).